Consider the following 617-residue polypeptide: V-type proton ATPase catalytic subunit A (617 aa).

250-257 contacts ATP; that stretch reads GAFGCGKT.

The protein belongs to the ATPase alpha/beta chains family. In terms of assembly, V-ATPase is a heteromultimeric enzyme made up of two complexes: the ATP-hydrolytic V1 complex and the proton translocation V0 complex. The V1 complex consists of three catalytic AB heterodimers that form a heterohexamer, three peripheral stalks each consisting of EG heterodimers, one central rotor including subunits D and F, and the regulatory subunits C and H. The proton translocation complex V0 consists of the proton transport subunit a, a ring of proteolipid subunits c9c'', rotary subunit d, subunits e and f, and the accessory subunits VhaAC45 and ATP6AP2.

It carries out the reaction ATP + H2O + 4 H(+)(in) = ADP + phosphate + 5 H(+)(out). Its activity is regulated as follows. ATP hydrolysis occurs at the interface between the nucleotide-binding domains of subunits A and B. ATP hydrolysis triggers a conformational change in the subunits D and F, which induces a shift of subunit d. The c-ring is subsequently rotated and results in a continuous proton translocation across the membrane. In terms of biological role, catalytic subunit of the V1 complex of vacuolar(H+)-ATPase (V-ATPase), a multisubunit enzyme composed of a peripheral complex (V1) that hydrolyzes ATP and a membrane integral complex (V0) that translocates protons. V-ATPase is responsible for acidifying and maintaining the pH of intracellular compartments and in some cell types, is targeted to the plasma membrane, where it is responsible for acidifying the extracellular environment. The sequence is that of V-type proton ATPase catalytic subunit A (VHAA) from Manduca sexta (Tobacco hawkmoth).